Here is a 391-residue protein sequence, read N- to C-terminus: Succinyl-diaminopimelate desuccinylase (391 aa).

His78 lines the Zn(2+) pocket. The active site involves Asp80. Position 111 (Asp111) interacts with Zn(2+). The Proton acceptor role is filled by Glu145. Residues Glu146, Glu174, and His360 each coordinate Zn(2+).

The protein belongs to the peptidase M20A family. DapE subfamily. Homodimer. Zn(2+) is required as a cofactor. Requires Co(2+) as cofactor.

It carries out the reaction N-succinyl-(2S,6S)-2,6-diaminopimelate + H2O = (2S,6S)-2,6-diaminopimelate + succinate. Its pathway is amino-acid biosynthesis; L-lysine biosynthesis via DAP pathway; LL-2,6-diaminopimelate from (S)-tetrahydrodipicolinate (succinylase route): step 3/3. In terms of biological role, catalyzes the hydrolysis of N-succinyl-L,L-diaminopimelic acid (SDAP), forming succinate and LL-2,6-diaminopimelate (DAP), an intermediate involved in the bacterial biosynthesis of lysine and meso-diaminopimelic acid, an essential component of bacterial cell walls. This is Succinyl-diaminopimelate desuccinylase from Albidiferax ferrireducens (strain ATCC BAA-621 / DSM 15236 / T118) (Rhodoferax ferrireducens).